Consider the following 169-residue polypeptide: Nucleoside diphosphate kinase 3 (169 aa).

ADP is bound by residues Lys-29, Arg-105, Thr-111, Arg-122, Val-129, and Asn-132. His-135 (pros-phosphohistidine intermediate) is an active-site residue.

Belongs to the NDK family. Homohexamer. Mg(2+) is required as a cofactor.

It localises to the mitochondrion outer membrane. The protein localises to the cytoplasm. It is found in the cytoskeleton. The protein resides in the cilium basal body. The enzyme catalyses a 2'-deoxyribonucleoside 5'-diphosphate + ATP = a 2'-deoxyribonucleoside 5'-triphosphate + ADP. It catalyses the reaction a ribonucleoside 5'-diphosphate + ATP = a ribonucleoside 5'-triphosphate + ADP. In terms of biological role, catalyzes the phosphorylation of ribonucleosides and deoxyribonucleoside diphosphates, other than ATP, into the corresponding triphosphates with ATP as the major phosphate donor. The ATP gamma phosphate is transferred to the nucleoside diphosphate beta phosphate via a ping-pong mechanism, using a phosphorylated active-site intermediate. Through the catalyzed exchange of gamma-phosphate between di- and triphosphonucleosides participates in regulation of intracellular nucleotide homeostasis. Required for ciliary function during renal development. Independently of its kinase activity, facilitates mitochondrial tethering prior to membrane fusion through its direct membrane-binding and hexamerization. Implicated in repair of both single- and double-stranded breaks in DNA, independently of its kinase activity. This chain is Nucleoside diphosphate kinase 3, found in Danio rerio (Zebrafish).